The following is a 2197-amino-acid chain: Protein Ycf2 (2197 aa).

1539 to 1546 (GSIGTGRS) serves as a coordination point for ATP.

The protein belongs to the Ycf2 family.

It is found in the plastid. It localises to the chloroplast stroma. Probable ATPase of unknown function. Its presence in a non-photosynthetic plant (Epifagus virginiana) and experiments in tobacco indicate that it has an essential function which is probably not related to photosynthesis. In Ipomoea purpurea (Common morning glory), this protein is Protein Ycf2.